Reading from the N-terminus, the 65-residue chain is Large ribosomal subunit protein bL33c (65 aa).

It belongs to the bacterial ribosomal protein bL33 family.

The protein resides in the plastid. It localises to the chloroplast. This is Large ribosomal subunit protein bL33c from Pyropia yezoensis (Susabi-nori).